Here is a 472-residue protein sequence, read N- to C-terminus: Acetyl-CoA decarbonylase/synthase complex subunit beta 2 (472 aa).

[Ni-Fe-S] cluster contacts are provided by Cys189, Cys192, Cys278, and Cys280.

It belongs to the CdhC family. In terms of assembly, monomer. The ACDS complex is made up of alpha, epsilon, beta, gamma and delta chains with a probable stoichiometry of (alpha(2)epsilon(2))(4)-beta(8)-(gamma(1)delta(1))(8) (Potential). Requires [Ni-Fe-S] cluster as cofactor.

It catalyses the reaction Co(I)-[corrinoid Fe-S protein] + acetyl-CoA + H(+) = methyl-Co(III)-[corrinoid Fe-S protein] + CO + CoA. Its pathway is one-carbon metabolism; methanogenesis from acetate. Its function is as follows. Part of a complex that catalyzes the reversible cleavage of acetyl-CoA, allowing growth on acetate as sole source of carbon and energy. The alpha-epsilon complex generates CO from CO(2), while the beta subunit (this protein) combines the CO with CoA and a methyl group to form acetyl-CoA. The methyl group, which is incorporated into acetyl-CoA, is transferred to the beta subunit by a corrinoid iron-sulfur protein (the gamma-delta complex). This is Acetyl-CoA decarbonylase/synthase complex subunit beta 2 (cdhC2) from Methanosarcina thermophila.